Here is a 161-residue protein sequence, read N- to C-terminus: Allophycocyanin beta chain (161 aa).

The residue at position 71 (N71) is an N4-methylasparagine. C81 provides a ligand contact to (2R,3E)-phycocyanobilin.

It belongs to the phycobiliprotein family. Heterodimer of an alpha and a beta chain. Post-translationally, contains one covalently linked phycocyanobilin chromophore.

The protein resides in the plastid. The protein localises to the chloroplast thylakoid membrane. Light-harvesting photosynthetic bile pigment-protein from the phycobiliprotein complex. Allophycocyanin has a maximum absorption at approximately 650 nanometers. The polypeptide is Allophycocyanin beta chain (apcB) (Pyropia haitanensis (Red seaweed)).